A 178-amino-acid polypeptide reads, in one-letter code: Large ribosomal subunit protein uL5 (178 aa).

This sequence belongs to the universal ribosomal protein uL5 family. As to quaternary structure, part of the 50S ribosomal subunit; part of the 5S rRNA/L5/L18/L25 subcomplex. Contacts the 5S rRNA and the P site tRNA. Forms a bridge to the 30S subunit in the 70S ribosome.

Functionally, this is one of the proteins that bind and probably mediate the attachment of the 5S RNA into the large ribosomal subunit, where it forms part of the central protuberance. In the 70S ribosome it contacts protein S13 of the 30S subunit (bridge B1b), connecting the 2 subunits; this bridge is implicated in subunit movement. Contacts the P site tRNA; the 5S rRNA and some of its associated proteins might help stabilize positioning of ribosome-bound tRNAs. This is Large ribosomal subunit protein uL5 from Acinetobacter baylyi (strain ATCC 33305 / BD413 / ADP1).